The following is a 243-amino-acid chain: Small ribosomal subunit protein eS4 (243 aa).

Residues Ile-43–Asn-105 enclose the S4 RNA-binding domain.

This sequence belongs to the eukaryotic ribosomal protein eS4 family. In terms of assembly, part of the 30S ribosomal subunit.

The chain is Small ribosomal subunit protein eS4 from Thermococcus kodakarensis (strain ATCC BAA-918 / JCM 12380 / KOD1) (Pyrococcus kodakaraensis (strain KOD1)).